A 371-amino-acid chain; its full sequence is Glycerol-3-phosphate dehydrogenase [NAD(+)] 2 (371 aa).

NAD(+) contacts are provided by residues 18-23 (GSGNWG), F50, and F106. Residue K129 participates in substrate binding. A162 is an NAD(+) binding site. The Proton acceptor role is filled by K222. Residues R294 and Q323 each contribute to the NAD(+) site. Position 294 to 295 (294 to 295 (RN)) interacts with substrate.

It belongs to the NAD-dependent glycerol-3-phosphate dehydrogenase family. As to quaternary structure, interacts with human CFH/complement factor H; the interaction is direct and enables the pathogen to evade the host innate immune system. Interacts with human CFHR1/complement factor H-related protein 1; the interaction is direct. Interacts with human PLG/plasminogen; the interaction is direct and provides active plasmin on the surface of fungal cells.

The protein localises to the secreted. It localises to the cell wall. The protein resides in the cytoplasm. Its subcellular location is the peroxisome. The enzyme catalyses sn-glycerol 3-phosphate + NAD(+) = dihydroxyacetone phosphate + NADH + H(+). In terms of biological role, may catalyze the production and accumulation of glycerol during hyperosmotic stress conditions. Glycerol acts as a osmoregulator that prevents loss of water and turgor of the cells. Mediates evasion of the host innate immune system by binding inhibitory components of the host alternative complement system, in a manner dependent on estrogen-induced inhibition of EBP1. The protein is Glycerol-3-phosphate dehydrogenase [NAD(+)] 2 of Candida albicans (strain SC5314 / ATCC MYA-2876) (Yeast).